Consider the following 801-residue polypeptide: Phenylalanine--tRNA ligase beta subunit (801 aa).

The tRNA-binding domain occupies 39-148; the sequence is AGSFTGVKVG…EDAVIGTDFR (110 aa). The B5 domain maps to 401–476; sequence PKPNKVALRR…RIYGYDNIPN (76 aa). Mg(2+)-binding residues include D454, D460, E463, and E464. In terms of domain architecture, FDX-ACB spans 707-800; the sequence is SKFPSNRRDI…VSEKFGAALR (94 aa).

The protein belongs to the phenylalanyl-tRNA synthetase beta subunit family. Type 1 subfamily. Tetramer of two alpha and two beta subunits. Mg(2+) is required as a cofactor.

Its subcellular location is the cytoplasm. The enzyme catalyses tRNA(Phe) + L-phenylalanine + ATP = L-phenylalanyl-tRNA(Phe) + AMP + diphosphate + H(+). The polypeptide is Phenylalanine--tRNA ligase beta subunit (Vibrio parahaemolyticus serotype O3:K6 (strain RIMD 2210633)).